Here is a 940-residue protein sequence, read N- to C-terminus: UvrABC system protein A (940 aa).

32–39 (GLSGSGKS) is a binding site for ATP. A C4-type zinc finger spans residues 252-279 (CIDCGISIDEISPRLFSFNSPFGKCDYC). 2 ABC transporter domains span residues 309 to 589 (WANT…EGSL) and 609 to 937 (SNGK…HYLK). 641-648 (GVSGSGKS) contacts ATP. The C4-type zinc-finger motif lies at 740-766 (CEACKGDGIIKIEMQFLSDVYVPCEIC).

Belongs to the ABC transporter superfamily. UvrA family. As to quaternary structure, forms a heterotetramer with UvrB during the search for lesions.

The protein resides in the cytoplasm. Functionally, the UvrABC repair system catalyzes the recognition and processing of DNA lesions. UvrA is an ATPase and a DNA-binding protein. A damage recognition complex composed of 2 UvrA and 2 UvrB subunits scans DNA for abnormalities. When the presence of a lesion has been verified by UvrB, the UvrA molecules dissociate. The chain is UvrABC system protein A from Clostridium tetani (strain Massachusetts / E88).